The following is a 595-amino-acid chain: Protein alan shepard (595 aa).

Positions 1-12 (MHPRYSPAPPPH) are enriched in pro residues. The segment at 1–82 (MHPRYSPAPP…ASVAAAPPTP (82 aa)) is disordered. Tyrosine 5 bears the Phosphotyrosine mark. The span at 13 to 31 (QQQQQQQQQPMGGPHQQQS) shows a compositional bias: low complexity. Residues 32–43 (AGGGPGHGGGAS) show a composition bias toward gly residues. Polar residues predominate over residues 50 to 68 (PNSQQLPPQMPRSQNYANG). A compositionally biased stretch (low complexity) spans 69 to 78 (SSSAASVAAA). Residues tyrosine 138 and tyrosine 154 each carry the phosphotyrosine modification. Residues 184–238 (RVPTAASPSNTNSSSSSNTGSQSGTLSTSLSNTTNTNTTMGPNGTAQNQNQQGGE) are disordered. The span at 190–238 (SPSNTNSSSSSNTGSQSGTLSTSLSNTTNTNTTMGPNGTAQNQNQQGGE) shows a compositional bias: low complexity. RRM domains are found at residues 243–316 (TNLY…MAKQ) and 322–401 (TNLY…FADG). The interval 569–595 (MTDSEQASTAASPDEAYTQYPHQAAPK) is disordered.

Functionally, has a role in the perception of gravity. This is Protein alan shepard from Drosophila virilis (Fruit fly).